The primary structure comprises 705 residues: Voltage-dependent calcium channel beta subunit-associated regulatory protein (705 aa).

The Extracellular segment spans residues 1–45 (MQPTATMATAATTTTTTTATVALTTSWDNATGRPTAEPDPILDNY). Asparagine 29 carries N-linked (GlcNAc...) asparagine glycosylation. A helical; Signal-anchor for type III membrane protein transmembrane segment spans residues 46 to 66 (VLLVVVMSLFVGGTLVVLSGV). Over 67 to 705 (LLLCKRCWDV…APTSPDHSPA (639 aa)) the chain is Cytoplasmic. Disordered regions lie at residues 91–113 (TTTY…EDPE) and 212–284 (GKAL…GSGA). Over residues 245–254 (PSASSDSGEG) the composition is skewed to polar residues. Over residues 267 to 284 (GGPGAAAGPGEAGPGSGA) the composition is skewed to gly residues. Phosphoserine is present on residues serine 299 and serine 304. Disordered regions lie at residues 316–353 (PSQR…DAPQ), 369–436 (FPHP…SYRD), 448–540 (AAAS…RRDY), and 559–655 (HFDD…CPGS). The span at 344 to 353 (TEQEEGDAPQ) shows a compositional bias: acidic residues. Residues 371 to 382 (HPRPFLASPPPA) show a composition bias toward pro residues. The segment covering 383-397 (LGRLEAAEAAGGASP) has biased composition (low complexity). A compositionally biased stretch (pro residues) spans 479 to 488 (AFPPPSPPAP). Positions 489-499 (RPKDGEARRLL) are enriched in basic and acidic residues. Phosphoserine is present on residues serine 507 and serine 528. The segment covering 567-585 (ARHRARAHPHARKQWQRGR) has biased composition (basic residues). A compositionally biased stretch (low complexity) spans 591 to 614 (GARAAPALAGTPAPPAGAARPARA). Serine 621 carries the post-translational modification Phosphoserine. Threonine 698 carries the post-translational modification Phosphothreonine. A phosphoserine mark is found at serine 699 and serine 703.

In terms of assembly, interacts with voltage-dependent calcium channels CACNB1, CACNB2, CACNB3 and CACNB4 beta subunits; prevents their interaction with the CACNA1C alpha subunit thereby negatively regulating the activity of the corresponding calcium channels.

The protein localises to the cytoplasmic vesicle. It is found in the secretory vesicle. Its subcellular location is the synaptic vesicle membrane. It localises to the cell membrane. The protein resides in the cell projection. The protein localises to the growth cone. Its function is as follows. Negatively regulates voltage-gated calcium channels by preventing the interaction between their alpha and beta subunits. Thereby, negatively regulates calcium channels activity at the plasma membrane and indirectly inhibits calcium-regulated exocytosis. The protein is Voltage-dependent calcium channel beta subunit-associated regulatory protein of Homo sapiens (Human).